The chain runs to 360 residues: Uroporphyrinogen decarboxylase (360 aa).

Substrate is bound by residues 31-35, D81, Y157, T212, and H333; that span reads RQAGR.

The protein belongs to the uroporphyrinogen decarboxylase family. In terms of assembly, homodimer.

The protein localises to the cytoplasm. The enzyme catalyses uroporphyrinogen III + 4 H(+) = coproporphyrinogen III + 4 CO2. The protein operates within porphyrin-containing compound metabolism; protoporphyrin-IX biosynthesis; coproporphyrinogen-III from 5-aminolevulinate: step 4/4. Its function is as follows. Catalyzes the decarboxylation of four acetate groups of uroporphyrinogen-III to yield coproporphyrinogen-III. This Herminiimonas arsenicoxydans protein is Uroporphyrinogen decarboxylase.